A 177-amino-acid chain; its full sequence is ADP-ribosylation factor-like protein 17 (177 aa).

The N-myristoyl glycine moiety is linked to residue Gly2. GTP contacts are provided by residues Ser24–Thr31, Asp67–His71, and Leu125–Ser128.

It belongs to the small GTPase superfamily. Arf family.

The protein localises to the golgi apparatus. In terms of biological role, GTP-binding protein that functions as an allosteric activator of the cholera toxin catalytic subunit, an ADP-ribosyltransferase. Involved in protein trafficking; may modulate vesicle budding and uncoating within the Golgi apparatus. This chain is ADP-ribosylation factor-like protein 17 (ARL17A), found in Homo sapiens (Human).